The primary structure comprises 577 residues: Secreted LysM effector Lys4 (577 aa).

The signal sequence occupies residues 1-19 (MRALTAAVLFVAGLTPVLA). The LysM 1 domain occupies 38–85 (AWYTIVKGDGCDTVEKKFKITPEQFFKWNPDVSTDCVKNFWVGNSYCV). A compositionally biased stretch (low complexity) spans 96–121 (TSTTVKSSSTTQKTSSTSSKLSSSSK). The segment at 96 to 135 (TSTTVKSSSTTQKTSSTSSKLSSSSKPVNTTTTPYSTRNP) is disordered. Over residues 122–135 (PVNTTTTPYSTRNP) the composition is skewed to polar residues. N-linked (GlcNAc...) asparagine glycans are attached at residues Asn124, Asn140, Asn216, and Asn235. 3 LysM domains span residues 251 to 298 (NFYQ…YYCV), 328 to 375 (KWYQ…WYCV), and 408 to 455 (QYWL…YVCV). Residues 464-485 (SGSTTTITGPPTKGSNPPTTTT) are compositionally biased toward low complexity. The segment at 464–490 (SGSTTTITGPPTKGSNPPTTTTSGGGG) is disordered. Residues 510–558 (FWFRGKDGASLFCADIAKDAGVSLPDFLKWNPGVGSNCESLWADTWYCV) form the LysM 5 domain.

Belongs to the secreted LysM effector family.

In terms of biological role, might have a role in sequestration of chitin oligosaccharides (breakdown products of fungal cell walls that are released during invasion and act as triggers of host immunity) to dampen host defense. This chain is Secreted LysM effector Lys4, found in Pochonia chlamydosporia (strain 123) (Metacordyceps chlamydosporia).